The chain runs to 301 residues: Elongation factor Ts (301 aa).

An involved in Mg(2+) ion dislocation from EF-Tu region spans residues 82–85 (TDFV).

It belongs to the EF-Ts family.

The protein localises to the cytoplasm. Its function is as follows. Associates with the EF-Tu.GDP complex and induces the exchange of GDP to GTP. It remains bound to the aminoacyl-tRNA.EF-Tu.GTP complex up to the GTP hydrolysis stage on the ribosome. This Hyphomonas neptunium (strain ATCC 15444) protein is Elongation factor Ts.